Consider the following 481-residue polypeptide: MASGGLRGLAVAGGGESSDSEDDGWEIGYLDRVSQKLKVPLPVEEKNETFKKALTTGDISLVQELLDSGISVDSSFRYGWTPLMYAASIANVELVRVLLDRGANASFDKDKQTILITACSARGSEEQILKCVELLLSRNADPNVACRRLMTPIMYAARDGHPQVVAVLVAHGAEVNTQDENGYTALTWAARQGHKNVVLKLLELGANKMLQTKDGKIPSEIAKRNKHLEIFNFLSLTLNPLEGNLKQLTKEETICKLLTTDSDKEKDHIFSSYTAFGDLEIFLHGLGLEHMTDLLKEKDITLRHLLTMRKDEFTKNGITNKDQQKILSALKELEVEEIKFGELPEVAKLEISGDEFLNFLLKLNKQCGHLITAVQNIITELPVNSHKIVLEWASPRNFTSVCEELVSNVEDLSEEVHKLKDLIQKLQNERENDPTHIPLMEEVSTWNSRILKRTAIAVCGFGFLLFICKLTVQRKYPNICF.

The segment covering 1 to 16 (MASGGLRGLAVAGGGE) has biased composition (gly residues). The interval 1–23 (MASGGLRGLAVAGGGESSDSEDD) is disordered. Ser17, Ser18, and Ser20 each carry phosphoserine. ANK repeat units lie at residues 45–74 (EKNE…SVDS), 78–107 (YGWT…NASF), 110–144 (DKQT…DPNV), 148–177 (RLMT…EVNT), 181–210 (NGYT…NKML), and 214–243 (DGKI…PLEG). Positions 272 to 334 (SYTAFGDLEI…KILSALKELE (63 aa)) constitute an SAM domain.

In terms of assembly, interacts with DDX4, PIWIL1, RANBP9 and TDRD1.

It localises to the cytoplasm. Plays a central role during spermatogenesis by repressing transposable elements and preventing their mobilization, which is essential for the germline integrity. Acts via the piRNA metabolic process, which mediates the repression of transposable elements during meiosis by forming complexes composed of piRNAs and Piwi proteins and governs the methylation and subsequent repression of transposons. Its association with pi-bodies suggests a participation in the primary piRNAs metabolic process. Required prior to the pachytene stage to facilitate the production of multiple types of piRNAs, including those associated with repeats involved in the regulation of retrotransposons. May act by mediating protein-protein interactions during germ cell maturation. The sequence is that of Ankyrin repeat, SAM and basic leucine zipper domain-containing protein 1 (ASZ1) from Microcebus murinus (Gray mouse lemur).